Consider the following 100-residue polypeptide: MKITQEEVSHVAKLSKLAFSPEETAEFATTLSKIVDMVELLNEVDTEGVPFTSNVAANINYMREDVAQPGWNREELFQNVPEKERGYIKVPAILDDGGDA.

This sequence belongs to the GatC family. Heterotrimer of A, B and C subunits.

The enzyme catalyses L-glutamyl-tRNA(Gln) + L-glutamine + ATP + H2O = L-glutaminyl-tRNA(Gln) + L-glutamate + ADP + phosphate + H(+). It catalyses the reaction L-aspartyl-tRNA(Asn) + L-glutamine + ATP + H2O = L-asparaginyl-tRNA(Asn) + L-glutamate + ADP + phosphate + 2 H(+). Allows the formation of correctly charged Asn-tRNA(Asn) or Gln-tRNA(Gln) through the transamidation of misacylated Asp-tRNA(Asn) or Glu-tRNA(Gln) in organisms which lack either or both of asparaginyl-tRNA or glutaminyl-tRNA synthetases. The reaction takes place in the presence of glutamine and ATP through an activated phospho-Asp-tRNA(Asn) or phospho-Glu-tRNA(Gln). The chain is Aspartyl/glutamyl-tRNA(Asn/Gln) amidotransferase subunit C from Streptococcus gordonii (strain Challis / ATCC 35105 / BCRC 15272 / CH1 / DL1 / V288).